Reading from the N-terminus, the 215-residue chain is Ependymin-2 (215 aa).

The signal sequence occupies residues 1–20 (MHTVKLLCVVFSCLCAVAWA). 2 N-linked (GlcNAc...) asparagine glycosylation sites follow: N71 and N94.

It belongs to the ependymin family. As to quaternary structure, forms disulfide-linked dimers. Different glycosylation variants are known as EPD-beta and EPD-gamma. Post-translationally, binds calcium through the terminal sialic acids. EPDs are synthesized in the meninx and secreted in the cerebrospinal fluid.

Its subcellular location is the secreted. In terms of biological role, may play a role in neural plasticity. May be involved during axon regeneration. This Carassius auratus (Goldfish) protein is Ependymin-2 (epd2).